The chain runs to 222 residues: Triosephosphate isomerase (222 aa).

9 to 11 provides a ligand contact to substrate; that stretch reads NFK. His-93 functions as the Electrophile in the catalytic mechanism. Glu-141 functions as the Proton acceptor in the catalytic mechanism. Substrate is bound by residues Ile-146, Gly-181, and 202-203; that span reads AS.

It belongs to the triosephosphate isomerase family. In terms of assembly, homotetramer; dimer of dimers.

The protein resides in the cytoplasm. The catalysed reaction is D-glyceraldehyde 3-phosphate = dihydroxyacetone phosphate. The protein operates within carbohydrate biosynthesis; gluconeogenesis. It functions in the pathway carbohydrate degradation; glycolysis; D-glyceraldehyde 3-phosphate from glycerone phosphate: step 1/1. Functionally, involved in the gluconeogenesis. Catalyzes stereospecifically the conversion of dihydroxyacetone phosphate (DHAP) to D-glyceraldehyde-3-phosphate (G3P). The chain is Triosephosphate isomerase from Methanothermus fervidus (strain ATCC 43054 / DSM 2088 / JCM 10308 / V24 S).